The chain runs to 329 residues: D-threo-aldose 1-dehydrogenase (329 aa).

The Proton donor role is filled by tyrosine 58. Substrate is bound at residue histidine 145.

This sequence belongs to the aldo/keto reductase family.

It carries out the reaction a D-threo-aldose + NAD(+) = a D-threo-aldono-1,5-lactone + NADH + H(+). With respect to regulation, inhibited strongly by Hg(2+), Cd(2+) and para-chloromercuribenzoic acid (PCMB) and weakly by Zn(2+) and iodoacetamide. Also inhibited strongly by L-xylose but not D-glucose. Functionally, catalyzes the oxidation of L-fucose to L-fuconolactone in the presence of NADP(+). Also active against L-galactose and, to a much lesser degree, D-arabinose. Uses NADP(+) as a hydrogen acceptor much more efficiently than NAD(+). In Pseudomonas sp, this protein is D-threo-aldose 1-dehydrogenase.